The primary structure comprises 447 residues: Mannose/glucose-specific lectin (447 aa).

A run of 3 repeats spans residues 1–149 (SLKG…VQPV), 150–295 (PHGT…VKPR), and 296–447 (DVEG…DTAV). A 3 X approximate tandem repeats region spans residues 1-447 (SLKGMISVGP…GIFVKPDTAV (447 aa)). Jacalin-type lectin domains follow at residues 5–148 (MISV…FVQP), 153–294 (TISF…YVKP), and 300–443 (SISI…FVKP).

The protein belongs to the jacalin lectin family. As to quaternary structure, homodimer. In terms of processing, the N-terminus is blocked.

Mannose/glucose specific lectin. Shows agglutinating activity against rabbit erythrocytes. The chain is Mannose/glucose-specific lectin from Parkia platycephala.